We begin with the raw amino-acid sequence, 160 residues long: Small ribosomal subunit protein uS7 (160 aa).

Belongs to the universal ribosomal protein uS7 family. As to quaternary structure, part of the 30S ribosomal subunit. Contacts proteins S9 and S11.

Functionally, one of the primary rRNA binding proteins, it binds directly to 16S rRNA where it nucleates assembly of the head domain of the 30S subunit. Is located at the subunit interface close to the decoding center, probably blocks exit of the E-site tRNA. In Rickettsia prowazekii (strain Madrid E), this protein is Small ribosomal subunit protein uS7.